The primary structure comprises 164 residues: NADH-quinone oxidoreductase subunit I (164 aa).

4Fe-4S ferredoxin-type domains lie at Leu55–Glu85 and Thr95–Asn124. [4Fe-4S] cluster-binding residues include Cys65, Cys68, Cys71, Cys75, Cys104, Cys107, Cys110, and Cys114.

Belongs to the complex I 23 kDa subunit family. In terms of assembly, NDH-1 is composed of 14 different subunits. Subunits NuoA, H, J, K, L, M, N constitute the membrane sector of the complex. It depends on [4Fe-4S] cluster as a cofactor.

The protein localises to the cell inner membrane. It carries out the reaction a quinone + NADH + 5 H(+)(in) = a quinol + NAD(+) + 4 H(+)(out). Functionally, NDH-1 shuttles electrons from NADH, via FMN and iron-sulfur (Fe-S) centers, to quinones in the respiratory chain. The immediate electron acceptor for the enzyme in this species is believed to be ubiquinone. Couples the redox reaction to proton translocation (for every two electrons transferred, four hydrogen ions are translocated across the cytoplasmic membrane), and thus conserves the redox energy in a proton gradient. In Ruegeria sp. (strain TM1040) (Silicibacter sp.), this protein is NADH-quinone oxidoreductase subunit I.